The sequence spans 314 residues: tRNA dimethylallyltransferase 1 (314 aa).

ATP is bound at residue 17 to 24; sequence GPTAAGKT. 19–24 serves as a coordination point for substrate; it reads TAAGKT. The tract at residues 42–45 is interaction with substrate tRNA; it reads DSRQ.

It belongs to the IPP transferase family. Monomer. Mg(2+) is required as a cofactor.

The enzyme catalyses adenosine(37) in tRNA + dimethylallyl diphosphate = N(6)-dimethylallyladenosine(37) in tRNA + diphosphate. Catalyzes the transfer of a dimethylallyl group onto the adenine at position 37 in tRNAs that read codons beginning with uridine, leading to the formation of N6-(dimethylallyl)adenosine (i(6)A). In Syntrophotalea carbinolica (strain DSM 2380 / NBRC 103641 / GraBd1) (Pelobacter carbinolicus), this protein is tRNA dimethylallyltransferase 1.